The following is a 341-amino-acid chain: Heat-inducible transcription repressor HrcA (341 aa).

Belongs to the HrcA family.

In terms of biological role, negative regulator of class I heat shock genes (grpE-dnaK-dnaJ and groELS operons). Prevents heat-shock induction of these operons. The polypeptide is Heat-inducible transcription repressor HrcA (Corynebacterium glutamicum (strain ATCC 13032 / DSM 20300 / JCM 1318 / BCRC 11384 / CCUG 27702 / LMG 3730 / NBRC 12168 / NCIMB 10025 / NRRL B-2784 / 534)).